The primary structure comprises 69 residues: Cytoinsectotoxin-2a (69 aa).

This sequence belongs to the cationic peptide 06 (cytoinsectotoxin) family. In terms of tissue distribution, expressed by the venom gland.

The protein localises to the secreted. In terms of biological role, insecticidal and antimicrobial peptide. Has insecticidal activity against larvae of flesh fly S.carnaria. Has antibacterial activity against Gram-positive bacterium B.subtilis B-501 (MIC=1.25 uM) and Gram-negative bacterium E.coli DH5alpha (MIC=2.5 uM). This Lachesana tarabaevi (Spider) protein is Cytoinsectotoxin-2a.